The primary structure comprises 274 residues: 2,3,4,5-tetrahydropyridine-2,6-dicarboxylate N-succinyltransferase (274 aa).

Substrate-binding residues include R104 and D141.

The protein belongs to the transferase hexapeptide repeat family. As to quaternary structure, homotrimer.

The protein resides in the cytoplasm. It catalyses the reaction (S)-2,3,4,5-tetrahydrodipicolinate + succinyl-CoA + H2O = (S)-2-succinylamino-6-oxoheptanedioate + CoA. The protein operates within amino-acid biosynthesis; L-lysine biosynthesis via DAP pathway; LL-2,6-diaminopimelate from (S)-tetrahydrodipicolinate (succinylase route): step 1/3. This is 2,3,4,5-tetrahydropyridine-2,6-dicarboxylate N-succinyltransferase from Escherichia coli O127:H6 (strain E2348/69 / EPEC).